Consider the following 424-residue polypeptide: 5-methylthioadenosine/S-adenosylhomocysteine deaminase (424 aa).

Zn(2+)-binding residues include histidine 60 and histidine 62. Substrate contacts are provided by glutamate 89 and histidine 181. A Zn(2+)-binding site is contributed by histidine 208. Residues glutamate 211 and aspartate 296 each contribute to the substrate site. Aspartate 296 provides a ligand contact to Zn(2+).

The protein belongs to the metallo-dependent hydrolases superfamily. MTA/SAH deaminase family. It depends on Zn(2+) as a cofactor.

The catalysed reaction is S-adenosyl-L-homocysteine + H2O + H(+) = S-inosyl-L-homocysteine + NH4(+). The enzyme catalyses S-methyl-5'-thioadenosine + H2O + H(+) = S-methyl-5'-thioinosine + NH4(+). Functionally, catalyzes the deamination of 5-methylthioadenosine and S-adenosyl-L-homocysteine into 5-methylthioinosine and S-inosyl-L-homocysteine, respectively. Is also able to deaminate adenosine. The sequence is that of 5-methylthioadenosine/S-adenosylhomocysteine deaminase from Thermococcus sibiricus (strain DSM 12597 / MM 739).